We begin with the raw amino-acid sequence, 110 residues long: uncharacterized protein (110 aa).

This sequence belongs to the RuBisCO large chain family.

The protein localises to the mitochondrion. This is an uncharacterized protein from Arabidopsis thaliana (Mouse-ear cress).